The primary structure comprises 383 residues: ATP phosphoribosyltransferase regulatory subunit (383 aa).

Belongs to the class-II aminoacyl-tRNA synthetase family. HisZ subfamily. As to quaternary structure, heteromultimer composed of HisG and HisZ subunits.

It localises to the cytoplasm. Its pathway is amino-acid biosynthesis; L-histidine biosynthesis; L-histidine from 5-phospho-alpha-D-ribose 1-diphosphate: step 1/9. Its function is as follows. Required for the first step of histidine biosynthesis. May allow the feedback regulation of ATP phosphoribosyltransferase activity by histidine. The protein is ATP phosphoribosyltransferase regulatory subunit of Chromobacterium violaceum (strain ATCC 12472 / DSM 30191 / JCM 1249 / CCUG 213 / NBRC 12614 / NCIMB 9131 / NCTC 9757 / MK).